The following is a 321-amino-acid chain: Acetylglutamate kinase (321 aa).

Residues 88 to 89 (GG), Arg110, and Asn216 each bind substrate.

It belongs to the acetylglutamate kinase family. ArgB subfamily.

It localises to the cytoplasm. It catalyses the reaction N-acetyl-L-glutamate + ATP = N-acetyl-L-glutamyl 5-phosphate + ADP. The protein operates within amino-acid biosynthesis; L-arginine biosynthesis; N(2)-acetyl-L-ornithine from L-glutamate: step 2/4. Catalyzes the ATP-dependent phosphorylation of N-acetyl-L-glutamate. This chain is Acetylglutamate kinase, found in Ehrlichia chaffeensis (strain ATCC CRL-10679 / Arkansas).